The chain runs to 204 residues: Large ribosomal subunit protein uL4 (204 aa).

Residues 53–77 form a disordered region; it reads ISDVSGTTAKPYSQKRTGRARQGSL. Polar residues predominate over residues 56–67; the sequence is VSGTTAKPYSQK.

It belongs to the universal ribosomal protein uL4 family. In terms of assembly, part of the 50S ribosomal subunit.

In terms of biological role, one of the primary rRNA binding proteins, this protein initially binds near the 5'-end of the 23S rRNA. It is important during the early stages of 50S assembly. It makes multiple contacts with different domains of the 23S rRNA in the assembled 50S subunit and ribosome. Forms part of the polypeptide exit tunnel. This Wolbachia sp. subsp. Brugia malayi (strain TRS) protein is Large ribosomal subunit protein uL4.